The chain runs to 154 residues: Large ribosomal subunit protein uL13 (154 aa).

It belongs to the universal ribosomal protein uL13 family. As to quaternary structure, part of the 50S ribosomal subunit.

Its function is as follows. This protein is one of the early assembly proteins of the 50S ribosomal subunit, although it is not seen to bind rRNA by itself. It is important during the early stages of 50S assembly. The protein is Large ribosomal subunit protein uL13 of Brucella melitensis biotype 2 (strain ATCC 23457).